The chain runs to 330 residues: Tryptophan--tRNA ligase (330 aa).

ATP is bound by residues 10–12 (QTT) and 18–19 (GN). The short motif at 11–19 (TTGALHLGN) is the 'HIGH' region element. Asp134 contacts L-tryptophan. ATP is bound by residues 146-148 (GED), Ile186, and 195-199 (KMSKS). The short motif at 195–199 (KMSKS) is the 'KMSKS' region element.

Belongs to the class-I aminoacyl-tRNA synthetase family. In terms of assembly, homodimer.

It is found in the cytoplasm. The catalysed reaction is tRNA(Trp) + L-tryptophan + ATP = L-tryptophyl-tRNA(Trp) + AMP + diphosphate + H(+). Functionally, catalyzes the attachment of tryptophan to tRNA(Trp). This is Tryptophan--tRNA ligase from Rickettsia typhi (strain ATCC VR-144 / Wilmington).